Consider the following 613-residue polypeptide: Pentatricopeptide repeat-containing protein At2g02750 (613 aa).

15 PPR repeats span residues 30 to 64 (NKFT…GFFV), 65 to 99 (DVFT…GIAS), 101 to 126 (NAAV…ARVS), 128 to 162 (SGMN…GFEM), 163 to 193 (EVYV…VPHK), 194 to 228 (SVVT…SSEE), 230 to 264 (NDVT…EFQF), 265 to 295 (ETMV…LKDT), 297 to 331 (NLIS…GLKP), 332 to 366 (DSAT…VMVP), 367 to 401 (SLKC…AAER), 402 to 432 (DIFV…FEPK), 435 to 469 (DPVF…KVEP), 470 to 500 (SLAT…MQEE), and 506 to 539 (STEH…PSSS). Residues 540–613 (VYSSLLGSCR…VKLPGLSLSG (74 aa)) form a type E motif; degenerate region.

Belongs to the PPR family. PCMP-E subfamily.

This is Pentatricopeptide repeat-containing protein At2g02750 (PCMP-E22) from Arabidopsis thaliana (Mouse-ear cress).